Consider the following 215-residue polypeptide: Transmembrane protein 267 (215 aa).

Helical transmembrane passes span 77-97 (FCEVALAGFFASIIDLDHFFL), 114-134 (PLHCSTLIPVVALALKFLMQL), and 178-198 (YWLYVVITASLPSVCSLIMCL).

The protein localises to the membrane. This chain is Transmembrane protein 267 (tmem267), found in Xenopus laevis (African clawed frog).